The primary structure comprises 943 residues: Isoleucine--tRNA ligase (943 aa).

The 'HIGH' region signature appears at 59–69 (PYANGQIHLGH). Glutamate 577 is an L-isoleucyl-5'-AMP binding site. Positions 618–622 (KMSKS) match the 'KMSKS' region motif. Lysine 621 lines the ATP pocket. Zn(2+) contacts are provided by cysteine 906, cysteine 909, cysteine 926, and cysteine 929.

It belongs to the class-I aminoacyl-tRNA synthetase family. IleS type 1 subfamily. Monomer. Zn(2+) is required as a cofactor.

It localises to the cytoplasm. It catalyses the reaction tRNA(Ile) + L-isoleucine + ATP = L-isoleucyl-tRNA(Ile) + AMP + diphosphate. Its function is as follows. Catalyzes the attachment of isoleucine to tRNA(Ile). As IleRS can inadvertently accommodate and process structurally similar amino acids such as valine, to avoid such errors it has two additional distinct tRNA(Ile)-dependent editing activities. One activity is designated as 'pretransfer' editing and involves the hydrolysis of activated Val-AMP. The other activity is designated 'posttransfer' editing and involves deacylation of mischarged Val-tRNA(Ile). In Xanthomonas oryzae pv. oryzae (strain MAFF 311018), this protein is Isoleucine--tRNA ligase.